A 109-amino-acid chain; its full sequence is Keratin, type II microfibrillar (109 aa).

The tract at residues 1–10 (QNRQCCESNL) is linker 1. The 109-residue stretch at 1–109 (QNRQCCESNL…RLYEEEIRVL (109 aa)) folds into the IF rod domain. Positions 11 to 109 (EPLFSGYIET…RLYEEEIRVL (99 aa)) are coil 1B.

Belongs to the intermediate filament family.

In terms of biological role, wool microfibrillar keratin. The protein is Keratin, type II microfibrillar of Ovis aries (Sheep).